Consider the following 899-residue polypeptide: Protein translocase subunit SecA (899 aa).

ATP-binding positions include Q87, 105–109 (GEGKT), and D512. Positions 846-899 (MEEEQQQQAQKKIVFNLGEEPATAPQPARSKKSASRNDPCPCGSGKKYKKCCGK) are disordered. Zn(2+) contacts are provided by C885, C887, C896, and C897.

Belongs to the SecA family. In terms of assembly, monomer and homodimer. Part of the essential Sec protein translocation apparatus which comprises SecA, SecYEG and auxiliary proteins SecDF-YajC and YidC. The cofactor is Zn(2+).

It is found in the cell inner membrane. The protein localises to the cytoplasm. The enzyme catalyses ATP + H2O + cellular proteinSide 1 = ADP + phosphate + cellular proteinSide 2.. Part of the Sec protein translocase complex. Interacts with the SecYEG preprotein conducting channel. Has a central role in coupling the hydrolysis of ATP to the transfer of proteins into and across the cell membrane, serving as an ATP-driven molecular motor driving the stepwise translocation of polypeptide chains across the membrane. In Geobacter metallireducens (strain ATCC 53774 / DSM 7210 / GS-15), this protein is Protein translocase subunit SecA.